Here is a 121-residue protein sequence, read N- to C-terminus: Small ribosomal subunit protein uS13 (121 aa).

The segment at 94-121 (GLPVRGQRTRTNARTRKGPRKGAAALKK) is disordered.

This sequence belongs to the universal ribosomal protein uS13 family. As to quaternary structure, part of the 30S ribosomal subunit. Forms a loose heterodimer with protein S19. Forms two bridges to the 50S subunit in the 70S ribosome.

Located at the top of the head of the 30S subunit, it contacts several helices of the 16S rRNA. In the 70S ribosome it contacts the 23S rRNA (bridge B1a) and protein L5 of the 50S subunit (bridge B1b), connecting the 2 subunits; these bridges are implicated in subunit movement. Contacts the tRNAs in the A and P-sites. This Verminephrobacter eiseniae (strain EF01-2) protein is Small ribosomal subunit protein uS13.